Consider the following 185-residue polypeptide: Ribosome-recycling factor (185 aa).

Belongs to the RRF family.

The protein localises to the cytoplasm. Functionally, responsible for the release of ribosomes from messenger RNA at the termination of protein biosynthesis. May increase the efficiency of translation by recycling ribosomes from one round of translation to another. In Pseudomonas putida (strain W619), this protein is Ribosome-recycling factor.